The following is a 33-amino-acid chain: MPRRRRSSSRPVRRRRRARVSRRRRRRGRRRRR.

The tract at residues 1–33 (MPRRRRSSSRPVRRRRRARVSRRRRRRGRRRRR) is disordered.

Testis.

It localises to the nucleus. It is found in the chromosome. Functionally, protamines substitute for histones in the chromatin of sperm during the haploid phase of spermatogenesis. They compact sperm DNA into a highly condensed, stable and inactive complex. The sequence is that of Protamine TP16 from Oncorhynchus mykiss (Rainbow trout).